The primary structure comprises 167 residues: Mediator of RNA polymerase II transcription subunit 10 (167 aa).

A compositionally biased stretch (gly residues) spans 141 to 158 (TGGRTVGGEGEGAGQGEG). Residues 141 to 167 (TGGRTVGGEGEGAGQGEGGEGRGEGGN) are disordered.

This sequence belongs to the Mediator complex subunit 10 family. Component of the Mediator complex.

It localises to the nucleus. In terms of biological role, component of the Mediator complex, a coactivator involved in the regulated transcription of nearly all RNA polymerase II-dependent genes. Mediator functions as a bridge to convey information from gene-specific regulatory proteins to the basal RNA polymerase II transcription machinery. Mediator is recruited to promoters by direct interactions with regulatory proteins and serves as a scaffold for the assembly of a functional preinitiation complex with RNA polymerase II and the general transcription factors. The polypeptide is Mediator of RNA polymerase II transcription subunit 10 (NUT2) (Chaetomium globosum (strain ATCC 6205 / CBS 148.51 / DSM 1962 / NBRC 6347 / NRRL 1970) (Soil fungus)).